We begin with the raw amino-acid sequence, 169 residues long: uncharacterized protein (169 aa).

A helical membrane pass occupies residues 97–117; sequence IVIFCILVIVAFVIWLVVWLF. The segment at 137–169 is disordered; sequence NYSGLPTPQPTPTHYPAEQYSYDPARDRDNYRY. A compositionally biased stretch (basic and acidic residues) spans 160-169; that stretch reads PARDRDNYRY.

It localises to the membrane. This is an uncharacterized protein from Caenorhabditis elegans.